Here is a 457-residue protein sequence, read N- to C-terminus: Toxin and drug export protein A (457 aa).

Residues 1 to 23 form the signal peptide; it reads MFTIKKLTLTIVVATTLTGCANI.

Belongs to the outer membrane factor (OMF) (TC 1.B.17) family. As to quaternary structure, homotrimer. Probably part of a complex composed of LtxB, LtxD and TdeA, which forms a single transport channel across the two membranes.

The protein resides in the cell outer membrane. Its function is as follows. Required for secretion of the LtxA leukotoxin and resistance to various antimicrobial compounds. The protein is Toxin and drug export protein A of Aggregatibacter actinomycetemcomitans (Actinobacillus actinomycetemcomitans).